We begin with the raw amino-acid sequence, 211 residues long: Large ribosomal subunit protein uL4 (211 aa).

The disordered stretch occupies residues Q40–G87. Residues Q41–R54 show a composition bias toward polar residues. A compositionally biased stretch (basic residues) spans G60–G71.

The protein belongs to the universal ribosomal protein uL4 family. In terms of assembly, part of the 50S ribosomal subunit.

Functionally, one of the primary rRNA binding proteins, this protein initially binds near the 5'-end of the 23S rRNA. It is important during the early stages of 50S assembly. It makes multiple contacts with different domains of the 23S rRNA in the assembled 50S subunit and ribosome. Its function is as follows. Forms part of the polypeptide exit tunnel. This chain is Large ribosomal subunit protein uL4, found in Synechococcus sp. (strain WH7803).